Consider the following 96-residue polypeptide: DNA-binding protein Saci_1468 (96 aa).

Belongs to the PDCD5 family.

This Sulfolobus acidocaldarius (strain ATCC 33909 / DSM 639 / JCM 8929 / NBRC 15157 / NCIMB 11770) protein is DNA-binding protein Saci_1468.